The primary structure comprises 340 residues: DNA-directed RNA polymerase subunit alpha (340 aa).

The segment at 1–233 (MYKNWRDLIR…EQLSIFINFD (233 aa)) is alpha N-terminal domain (alpha-NTD). Residues 246–340 (DEIDKINENL…RLRGEQNEEE (95 aa)) are alpha C-terminal domain (alpha-CTD).

This sequence belongs to the RNA polymerase alpha chain family. As to quaternary structure, homodimer. The RNAP catalytic core consists of 2 alpha, 1 beta, 1 beta' and 1 omega subunit. When a sigma factor is associated with the core the holoenzyme is formed, which can initiate transcription.

The enzyme catalyses RNA(n) + a ribonucleoside 5'-triphosphate = RNA(n+1) + diphosphate. Functionally, DNA-dependent RNA polymerase catalyzes the transcription of DNA into RNA using the four ribonucleoside triphosphates as substrates. The chain is DNA-directed RNA polymerase subunit alpha from Pelobacter propionicus (strain DSM 2379 / NBRC 103807 / OttBd1).